Reading from the N-terminus, the 1462-residue chain is Protein peg1 (1462 aa).

2 disordered regions span residues 528–563 (SFSK…SRER) and 573–592 (FHST…SIAI). Low complexity-rich tracts occupy residues 538–552 (SSNS…RLGL) and 574–589 (HSTS…HSPS). A Phosphoserine modification is found at Ser599. Residues 838–928 (SSTHQEHLSK…NCSEESLDDH (91 aa)) are disordered. Residues 847–866 (KNLPTLNTSSSSNSSQTDLL) show a composition bias toward low complexity. Over residues 870–896 (GKGETKETEMQSPIESKEGLLSKDTHI) the composition is skewed to basic and acidic residues. At Ser1221 the chain carries Phosphoserine. The stretch at 1342-1367 (TLIAEIADLQGLYEFTQQRLQSLNTE) forms a coiled coil.

It belongs to the CLASP family. Interacts with microtubules. Interacts with dhc1, mal3 and tea1.

The protein localises to the cytoplasm. Its subcellular location is the cytoskeleton. The protein resides in the spindle. It is found in the microtubule organizing center. It localises to the spindle pole body. Microtubule binding protein that regulates the stability of dynamic microtubules. Required for mitotic spindle formation. This chain is Protein peg1 (peg1), found in Schizosaccharomyces pombe (strain 972 / ATCC 24843) (Fission yeast).